The primary structure comprises 242 residues: ATP-dependent dethiobiotin synthetase BioD (242 aa).

12-17 (EVGKTV) lines the ATP pocket. Thr16 is a Mg(2+) binding site. Residue Lys37 is part of the active site. Position 41 (Ser41) interacts with substrate. Residues Asp51 and 112–115 (EGAG) contribute to the ATP site. Residues Asp51 and Glu112 each contribute to the Mg(2+) site.

It belongs to the dethiobiotin synthetase family. As to quaternary structure, homodimer. Mg(2+) serves as cofactor.

The protein localises to the cytoplasm. The enzyme catalyses (7R,8S)-7,8-diammoniononanoate + CO2 + ATP = (4R,5S)-dethiobiotin + ADP + phosphate + 3 H(+). It functions in the pathway cofactor biosynthesis; biotin biosynthesis; biotin from 7,8-diaminononanoate: step 1/2. Its function is as follows. Catalyzes a mechanistically unusual reaction, the ATP-dependent insertion of CO2 between the N7 and N8 nitrogen atoms of 7,8-diaminopelargonic acid (DAPA, also called 7,8-diammoniononanoate) to form a ureido ring. The protein is ATP-dependent dethiobiotin synthetase BioD of Bacillus cereus (strain ATCC 14579 / DSM 31 / CCUG 7414 / JCM 2152 / NBRC 15305 / NCIMB 9373 / NCTC 2599 / NRRL B-3711).